The chain runs to 552 residues: Putative transport protein ECA4401 (552 aa).

5 helical membrane-spanning segments follow: residues 4–24 (IALT…IGNW), 26–46 (IYGV…VGHV), 65–85 (FGLI…FFSS), 90–112 (GLRL…VMLH), and 158–178 (TGYA…MWLM). RCK C-terminal domains follow at residues 191–276 (KQFE…VIGN) and 279–361 (ETSL…IVGN). 6 helical membrane passes run 371 to 391 (MLPV…PLMV), 393 to 413 (GFPV…ALVL), 439 to 459 (IVLF…DTLL), 464 to 484 (VWWI…VGIL), 493 to 513 (YLTL…LAFA), and 530 to 550 (VYPL…VLFL).

The protein belongs to the AAE transporter (TC 2.A.81) family. YidE subfamily.

It localises to the cell membrane. The polypeptide is Putative transport protein ECA4401 (Pectobacterium atrosepticum (strain SCRI 1043 / ATCC BAA-672) (Erwinia carotovora subsp. atroseptica)).